A 215-amino-acid chain; its full sequence is MQHDASSLPRLILASSSRYRRELLERLRAPFDVVTPEVDETPLPGETPSATALRLAAAKARAAAERVRAPHGALVIGSDQVATFDGLQIGKPGTHERALAQLQAMRGRDVEFHSALCLYDSRCGQTQIEDVVTRVRFRTLTDVELDAYLRAETPYDVAGSAKSEGLGIALLDAIDSDDPTALVGLPLIALTRMLRAAGYPLFDAPASAADGANGQ.

Asp-79 (proton acceptor) is an active-site residue.

Belongs to the Maf family. YceF subfamily. A divalent metal cation serves as cofactor.

The protein localises to the cytoplasm. It carries out the reaction N(7)-methyl-GTP + H2O = N(7)-methyl-GMP + diphosphate + H(+). In terms of biological role, nucleoside triphosphate pyrophosphatase that hydrolyzes 7-methyl-GTP (m(7)GTP). May have a dual role in cell division arrest and in preventing the incorporation of modified nucleotides into cellular nucleic acids. The polypeptide is 7-methyl-GTP pyrophosphatase (Burkholderia thailandensis (strain ATCC 700388 / DSM 13276 / CCUG 48851 / CIP 106301 / E264)).